We begin with the raw amino-acid sequence, 271 residues long: NADPH-dependent 7-cyano-7-deazaguanine reductase (271 aa).

Ile-81–Ser-83 is a binding site for substrate. NADPH is bound at residue Ser-83–Lys-84. Cys-177 functions as the Thioimide intermediate in the catalytic mechanism. The active-site Proton donor is Asp-184. Substrate is bound at residue His-216–Glu-217. Arg-245–Gly-246 is a binding site for NADPH.

The protein belongs to the GTP cyclohydrolase I family. QueF type 2 subfamily. As to quaternary structure, homodimer.

It is found in the cytoplasm. The enzyme catalyses 7-aminomethyl-7-carbaguanine + 2 NADP(+) = 7-cyano-7-deazaguanine + 2 NADPH + 3 H(+). It functions in the pathway tRNA modification; tRNA-queuosine biosynthesis. Catalyzes the NADPH-dependent reduction of 7-cyano-7-deazaguanine (preQ0) to 7-aminomethyl-7-deazaguanine (preQ1). The sequence is that of NADPH-dependent 7-cyano-7-deazaguanine reductase from Xanthomonas axonopodis pv. citri (strain 306).